The primary structure comprises 707 residues: E3 ubiquitin-protein ligase Praja-2 (707 aa).

Over residues 1 to 10 (MSQYTEKEPS) the composition is skewed to basic and acidic residues. Disordered regions lie at residues 1-23 (MSQY…AWPR), 75-120 (NTAG…PSVA), and 242-290 (AGDA…CVPG). N-acetylserine is present on Ser-2. Over residues 109–119 (LNQSTESNPSV) the composition is skewed to polar residues. Basic and acidic residues predominate over residues 246–276 (EAVHQDGQEFQRSSEDGIVRKRRQDDTDQGR). Ser-306 and Ser-320 each carry phosphoserine. Position 339 is a phosphoserine; by PKA (Ser-339). Disordered regions lie at residues 380 to 403 (VTPR…GRQE) and 424 to 493 (EDSS…QTSL). The segment covering 381–391 (TPREAERHRAT) has biased composition (basic and acidic residues). Ser-430 is modified (phosphoserine). Residues 465–481 (NEPELQSDSSGPEEENQ) show a composition bias toward acidic residues. A compositionally biased stretch (polar residues) spans 482–491 (ELSLQEGEQT). An interaction with PRKAR1A, PRKAR2A and PRKAR2B region spans residues 530–707 (DGNNNLEDDS…PANDNAEEAP (178 aa)). Residues 549-569 (WSLFDGFADGLGVAEAISYVD) are mediates interaction with TBC1D31. The segment at 633–674 (CPICCSEYIKDDIATELPCHHFFHKPCVSIWLQKSGTCPVCR) adopts an RING-type; atypical zinc-finger fold. Residues 686-707 (AAASSEPDLDASPANDNAEEAP) are disordered.

As to quaternary structure, binds ubiquitin-conjugating enzymes (E2s). In vitro, interacts with the ubiquitin-conjugating enzyme, UBE2D2. The phosphorylated form interacts with PRKAR1A, PRKAR2A and PRKAR2B. Binds the catalytic subunits of cAMP-dependent protein kinase. Interacts with MFHAS1. Interacts with TBC1D31; the interaction is direct and recruits PJA2 to centrosomes. In terms of tissue distribution, highly expressed in the brain, in nerve cells but not in glial cells. Abundantly expressed in pyramidal neurons and in the CA3 region of apical dendrites. Colocalizes with PRKAR2B in dentate granule cells and at postsynaptic sites of primary hippocampal neurons.

The protein localises to the cytoplasm. It localises to the cell membrane. It is found in the endoplasmic reticulum membrane. The protein resides in the golgi apparatus membrane. Its subcellular location is the synapse. The protein localises to the postsynaptic density. It localises to the cytoskeleton. It is found in the microtubule organizing center. The protein resides in the centrosome. It carries out the reaction S-ubiquitinyl-[E2 ubiquitin-conjugating enzyme]-L-cysteine + [acceptor protein]-L-lysine = [E2 ubiquitin-conjugating enzyme]-L-cysteine + N(6)-ubiquitinyl-[acceptor protein]-L-lysine.. It functions in the pathway protein modification; protein ubiquitination. Its function is as follows. Has E2-dependent E3 ubiquitin-protein ligase activity. Responsible for ubiquitination of cAMP-dependent protein kinase type I and type II-alpha/beta regulatory subunits and for targeting them for proteasomal degradation. Essential for PKA-mediated long-term memory processes. Through the ubiquitination of MFHAS1, positively regulates the TLR2 signaling pathway that leads to the activation of the downstream p38 and JNK MAP kinases and promotes the polarization of macrophages toward the pro-inflammatory M1 phenotype. Plays a role in ciliogenesis by ubiquitinating OFD1. In Rattus norvegicus (Rat), this protein is E3 ubiquitin-protein ligase Praja-2 (Pja2).